We begin with the raw amino-acid sequence, 296 residues long: 4-hydroxy-tetrahydrodipicolinate synthase (296 aa).

T47 serves as a coordination point for pyruvate. Residue Y136 is the Proton donor/acceptor of the active site. The active-site Schiff-base intermediate with substrate is the K164. V206 is a pyruvate binding site.

This sequence belongs to the DapA family. As to quaternary structure, homotetramer; dimer of dimers.

Its subcellular location is the cytoplasm. It carries out the reaction L-aspartate 4-semialdehyde + pyruvate = (2S,4S)-4-hydroxy-2,3,4,5-tetrahydrodipicolinate + H2O + H(+). It functions in the pathway amino-acid biosynthesis; L-lysine biosynthesis via DAP pathway; (S)-tetrahydrodipicolinate from L-aspartate: step 3/4. Its function is as follows. Catalyzes the condensation of (S)-aspartate-beta-semialdehyde [(S)-ASA] and pyruvate to 4-hydroxy-tetrahydrodipicolinate (HTPA). The protein is 4-hydroxy-tetrahydrodipicolinate synthase of Thermosynechococcus vestitus (strain NIES-2133 / IAM M-273 / BP-1).